A 427-amino-acid polypeptide reads, in one-letter code: Transcobalamin-2 (427 aa).

The first 18 residues, Met-1–Thr-18, serve as a signal peptide directing secretion. Cystine bridges form between Cys-21–Cys-267, Cys-83–Cys-96, Cys-116–Cys-309, and Cys-165–Cys-205. Residues Gln-104, Thr-152–Gln-156, His-190, His-190–Asp-194, Asn-242, Ser-245, Gln-291, and Trp-395–Leu-397 each bind cob(II)alamin.

Belongs to the eukaryotic cobalamin transport proteins family. Interacts with CD320 (via LDL-receptor class A domains).

It localises to the secreted. In terms of biological role, primary vitamin B12-binding and transport protein. Delivers cobalamin to cells. The chain is Transcobalamin-2 (TCN2) from Homo sapiens (Human).